The following is a 213-amino-acid chain: Orotate phosphoribosyltransferase (213 aa).

Lysine 26 is a binding site for 5-phospho-alpha-D-ribose 1-diphosphate. An orotate-binding site is contributed by 34–35 (FF). 5-phospho-alpha-D-ribose 1-diphosphate contacts are provided by residues 72–73 (YK), arginine 99, lysine 100, lysine 103, histidine 105, and 124–132 (DDVITAGTA). Positions 128 and 156 each coordinate orotate.

Belongs to the purine/pyrimidine phosphoribosyltransferase family. PyrE subfamily. In terms of assembly, homodimer. Requires Mg(2+) as cofactor.

The catalysed reaction is orotidine 5'-phosphate + diphosphate = orotate + 5-phospho-alpha-D-ribose 1-diphosphate. It functions in the pathway pyrimidine metabolism; UMP biosynthesis via de novo pathway; UMP from orotate: step 1/2. Catalyzes the transfer of a ribosyl phosphate group from 5-phosphoribose 1-diphosphate to orotate, leading to the formation of orotidine monophosphate (OMP). In Salmonella typhi, this protein is Orotate phosphoribosyltransferase.